We begin with the raw amino-acid sequence, 601 residues long: Elongation factor 4 (601 aa).

The tr-type G domain maps to Lys7–Gln189. GTP is bound by residues Asp19–Thr24 and Asn136–Asp139.

It belongs to the TRAFAC class translation factor GTPase superfamily. Classic translation factor GTPase family. LepA subfamily.

It is found in the cell inner membrane. It carries out the reaction GTP + H2O = GDP + phosphate + H(+). Its function is as follows. Required for accurate and efficient protein synthesis under certain stress conditions. May act as a fidelity factor of the translation reaction, by catalyzing a one-codon backward translocation of tRNAs on improperly translocated ribosomes. Back-translocation proceeds from a post-translocation (POST) complex to a pre-translocation (PRE) complex, thus giving elongation factor G a second chance to translocate the tRNAs correctly. Binds to ribosomes in a GTP-dependent manner. The chain is Elongation factor 4 from Methylocella silvestris (strain DSM 15510 / CIP 108128 / LMG 27833 / NCIMB 13906 / BL2).